The following is a 423-amino-acid chain: D-tagatose-1,6-bisphosphate aldolase subunit GatZ (423 aa).

Belongs to the GatZ/KbaZ family. GatZ subfamily. As to quaternary structure, forms a complex with GatY.

The protein operates within carbohydrate metabolism; D-tagatose 6-phosphate degradation; D-glyceraldehyde 3-phosphate and glycerone phosphate from D-tagatose 6-phosphate: step 2/2. Component of the tagatose-1,6-bisphosphate aldolase GatYZ that is required for full activity and stability of the Y subunit. Could have a chaperone-like function for the proper and stable folding of GatY. When expressed alone, GatZ does not show any aldolase activity. Is involved in the catabolism of galactitol. The protein is D-tagatose-1,6-bisphosphate aldolase subunit GatZ of Salmonella choleraesuis (strain SC-B67).